Consider the following 228-residue polypeptide: Probable transcriptional regulatory protein SilR (228 aa).

One can recognise a Response regulatory domain in the interval 2-116 (KILIVEDDIK…ELLARVRTLL (115 aa)). The residue at position 51 (D51) is a 4-aspartylphosphate. A DNA-binding region (ompR/PhoB-type) is located at residues 125 to 225 (ESQLKVADLS…VRGVGYMLEI (101 aa)).

Phosphorylated by SilS.

The protein localises to the cytoplasm. Functionally, component of the sil cation-efflux system that confers resistance to silver. Probable member of a two-component regulatory system SilS/SilR. This is Probable transcriptional regulatory protein SilR (silR) from Salmonella typhimurium.